The chain runs to 106 residues: Small ribosomal subunit protein uS10 (106 aa).

It belongs to the universal ribosomal protein uS10 family. Part of the 30S ribosomal subunit.

Involved in the binding of tRNA to the ribosomes. The protein is Small ribosomal subunit protein uS10 of Synechococcus sp. (strain CC9311).